A 144-amino-acid polypeptide reads, in one-letter code: Ribosome-binding factor A (144 aa).

The interval 121–144 is disordered; sequence KAQTGVEEPLENTAEGEENPSGGE. Positions 128-138 are enriched in acidic residues; sequence EPLENTAEGEE.

It belongs to the RbfA family. As to quaternary structure, monomer. Binds 30S ribosomal subunits, but not 50S ribosomal subunits or 70S ribosomes.

It is found in the cytoplasm. Its function is as follows. One of several proteins that assist in the late maturation steps of the functional core of the 30S ribosomal subunit. Associates with free 30S ribosomal subunits (but not with 30S subunits that are part of 70S ribosomes or polysomes). Required for efficient processing of 16S rRNA. May interact with the 5'-terminal helix region of 16S rRNA. This is Ribosome-binding factor A from Synechococcus sp. (strain JA-2-3B'a(2-13)) (Cyanobacteria bacterium Yellowstone B-Prime).